We begin with the raw amino-acid sequence, 317 residues long: Acetyl-coenzyme A carboxylase carboxyl transferase subunit alpha (317 aa).

Positions 40-294 (RLQKKSEELT…KARLLTDLED (255 aa)) constitute a CoA carboxyltransferase C-terminal domain.

This sequence belongs to the AccA family. Acetyl-CoA carboxylase is a heterohexamer composed of biotin carboxyl carrier protein (AccB), biotin carboxylase (AccC) and two subunits each of ACCase subunit alpha (AccA) and ACCase subunit beta (AccD).

It localises to the cytoplasm. It carries out the reaction N(6)-carboxybiotinyl-L-lysyl-[protein] + acetyl-CoA = N(6)-biotinyl-L-lysyl-[protein] + malonyl-CoA. It functions in the pathway lipid metabolism; malonyl-CoA biosynthesis; malonyl-CoA from acetyl-CoA: step 1/1. Component of the acetyl coenzyme A carboxylase (ACC) complex. First, biotin carboxylase catalyzes the carboxylation of biotin on its carrier protein (BCCP) and then the CO(2) group is transferred by the carboxyltransferase to acetyl-CoA to form malonyl-CoA. This is Acetyl-coenzyme A carboxylase carboxyl transferase subunit alpha from Actinobacillus succinogenes (strain ATCC 55618 / DSM 22257 / CCUG 43843 / 130Z).